A 290-amino-acid polypeptide reads, in one-letter code: Porphobilinogen deaminase (290 aa).

Residue cysteine 237 is modified to S-(dipyrrolylmethanemethyl)cysteine.

Belongs to the HMBS family. Monomer. Dipyrromethane is required as a cofactor.

It catalyses the reaction 4 porphobilinogen + H2O = hydroxymethylbilane + 4 NH4(+). It functions in the pathway porphyrin-containing compound metabolism; protoporphyrin-IX biosynthesis; coproporphyrinogen-III from 5-aminolevulinate: step 2/4. Functionally, tetrapolymerization of the monopyrrole PBG into the hydroxymethylbilane pre-uroporphyrinogen in several discrete steps. The protein is Porphobilinogen deaminase of Clostridium botulinum (strain Kyoto / Type A2).